The chain runs to 101 residues: Small ribosomal subunit protein uS14 (101 aa).

A compositionally biased stretch (basic and acidic residues) spans 1-10 (MAKKSSIEKN). The disordered stretch occupies residues 1–23 (MAKKSSIEKNNRRRRMNRNAAAK). Residues 11–23 (NRRRRMNRNAAAK) are compositionally biased toward basic residues.

This sequence belongs to the universal ribosomal protein uS14 family. Part of the 30S ribosomal subunit. Contacts proteins S3 and S10.

In terms of biological role, binds 16S rRNA, required for the assembly of 30S particles and may also be responsible for determining the conformation of the 16S rRNA at the A site. This is Small ribosomal subunit protein uS14 from Nitrobacter winogradskyi (strain ATCC 25391 / DSM 10237 / CIP 104748 / NCIMB 11846 / Nb-255).